A 1099-amino-acid polypeptide reads, in one-letter code: MDASEFMDTMDPSLSELGDEFTLGDIDEMLQFVSNQVDFPDIFEDQMGGGATARTLPQAVPSAILTPPHTPVQTSSQTHTQTLTQAHTQTHTQTHTQTRTPPVLQPRPQPITQVQTQTFPMQTLAVQTQAQPQTVMITPTATPSRFIQNQVICQQNNATSFQVLQPQMQSIMTSPQVQPMTIQHQRVLTPAGQTIQTLSTAPTTVHTMSQQVPVLVHQPQILKTDSLLLTTKPDGTQVLSTVQSPTGITTLTTPIQTTALQMPTLMSSNILTTVPVVMGGGDKLPIKQLSSGPAHNIGGARVGVEQSPVVGPGGVVKEGERRTTHNIIEKRYRSSINDKILELRDLVLGNDAKMHKSGVLRKAIDYIKYLQQVNHKLRQENLTLKMANQKNKSACVSDVDLELKAEVSLISPPPSDSGSSSPAQLSPYCIDSEPGSPLLEHEQLKSEPDSPSCVGVMDRSRLLLCALSFLCLSLNPLPSLLGAEAPAGSPEVAGHGPTRTLFSLPAQTQSFGAWLWCVLPFLLVWVVSGVGVVWGCVRVLYLWEPVTPLHSPTSVRFWRHRKQADLQLYRGDYAGAVLSLQTCLSVLSRVLPVTTLDIMCSLSWNLIRYCLRRPAPLGWLVRLVGGRHEGEESQTSSRDAALVYHKLSQLQLTGQMERRPLWGVCVSLSAVNLCESAEGKLTATQQVQVYVTAAISVRAALGKHLTCLPAYLLSCAEALTCQSDSKPLPDCLRWIFTPLGRQFFLSCDWSVRSESDGQIFTSARDKADPIAQLHRCFCQKLLERATHTLIEPQSREDAGEFTGVLEFLQLLNSCTEDSAPSTAPFPALANQSSTSVRDPVCRWWASVLTAAVHWLQGDDASVRSLLAEAERMPRALHTLDHPLPKAVLALCKAVQMSVCPQKGEGVVSCLSHCQRASAQLHISVCQSHNNTWLHKGVELLVCDLLLTLRTSLWQRGGGSNGEPGPAPGSQLSGFQRDLSSLRRLGQAHRQAQHKLFLHETTVRLMAGASPTRTHQLLRHRTHNYTTTDGECVLGERERAHAILLACRHLPLPLLTPPGHRARLLAEAKRTLERVGDRRSLQDCQHILLRLSGGTTIAAS.

The transcriptional activation (acidic) stretch occupies residues 1 to 47 (MDASEFMDTMDPSLSELGDEFTLGDIDEMLQFVSNQVDFPDIFEDQM). Over 1 to 461 (MDASEFMDTM…SCVGVMDRSR (461 aa)) the chain is Cytoplasmic. The interval 65 to 107 (LTPPHTPVQTSSQTHTQTLTQAHTQTHTQTHTQTRTPPVLQPR) is disordered. A compositionally biased stretch (low complexity) spans 71–100 (PVQTSSQTHTQTLTQAHTQTHTQTHTQTRT). The region spanning 320 to 370 (ERRTTHNIIEKRYRSSINDKILELRDLVLGNDAKMHKSGVLRKAIDYIKYL) is the bHLH domain. The segment at 370-391 (LQQVNHKLRQENLTLKMANQKN) is leucine-zipper. The chain crosses the membrane as a helical span at residues 462–482 (LLLCALSFLCLSLNPLPSLLG). Over 483–513 (AEAPAGSPEVAGHGPTRTLFSLPAQTQSFGA) the chain is Lumenal. Residues 514-534 (WLWCVLPFLLVWVVSGVGVVW) form a helical membrane-spanning segment. Topologically, residues 535 to 1099 (GCVRVLYLWE…LSGGTTIAAS (565 aa)) are cytoplasmic.

This sequence belongs to the SREBP family. Forms a tight complex with scap, the SCAP-SREBP complex, in the endoplasmic reticulum membrane. In terms of assembly, homodimer; efficient DNA binding of the soluble transcription factor fragment requires dimerization with another bHLH protein. In terms of processing, processed in the Golgi apparatus, releasing the protein from the membrane. At low cholesterol the SCAP-SREBP complex is recruited into COPII vesicles for export from the endoplasmic reticulum. In the Golgi, complex SREBPs are cleaved sequentially by site-1 (mbtps1, S1P) and site-2 (mbtps2, S2P) protease. The first cleavage by site-1 protease occurs within the luminal loop, the second cleavage by site-2 protease occurs within the first transmembrane domain, releasing the transcription factor from the Golgi membrane.

The protein localises to the endoplasmic reticulum membrane. Its subcellular location is the golgi apparatus membrane. It is found in the cytoplasmic vesicle. It localises to the COPII-coated vesicle membrane. The protein resides in the nucleus. Functionally, precursor of the transcription factor form (Processed sterol regulatory element-binding protein 2), which is embedded in the endoplasmic reticulum membrane. Low sterol concentrations promote processing of this form, releasing the transcription factor form that translocates into the nucleus and activates transcription of genes involved in cholesterol biosynthesis. Its function is as follows. Key transcription factor that regulates expression of genes involved in cholesterol biosynthesis. Binds to the sterol regulatory element 1 (SRE-1) (5'-ATCACCCCAC-3'). Has dual sequence specificity binding to both an E-box motif (5'-ATCACGTGA-3') and to SRE-1 (5'-ATCACCCCAC-3'). Regulates transcription of genes related to cholesterol synthesis pathway. Activated by mediated cholesterol efflux, transactivates NOTCH and promotes hematopoietic stem and progenitor cell emergence. The sequence is that of Sterol regulatory element-binding protein 2 from Danio rerio (Zebrafish).